A 137-amino-acid polypeptide reads, in one-letter code: Putative pre-16S rRNA nuclease (137 aa).

The protein belongs to the YqgF nuclease family.

Its subcellular location is the cytoplasm. In terms of biological role, could be a nuclease involved in processing of the 5'-end of pre-16S rRNA. In Anaeromyxobacter dehalogenans (strain 2CP-C), this protein is Putative pre-16S rRNA nuclease.